Consider the following 137-residue polypeptide: Large ribosomal subunit protein uL16 (137 aa).

This sequence belongs to the universal ribosomal protein uL16 family. As to quaternary structure, part of the 50S ribosomal subunit.

Binds 23S rRNA and is also seen to make contacts with the A and possibly P site tRNAs. This is Large ribosomal subunit protein uL16 from Leuconostoc citreum (strain KM20).